Here is a 292-residue protein sequence, read N- to C-terminus: Acetyl-coenzyme A carboxylase carboxyl transferase subunit beta (292 aa).

Residues 35–292 enclose the CoA carboxyltransferase N-terminal domain; that stretch reads VFSQCEQCNS…LKLHAKKVTS (258 aa). Cys39, Cys42, Cys58, and Cys61 together coordinate Zn(2+). The C4-type zinc finger occupies 39-61; that stretch reads CEQCNSAIYNKDLEHNYEVCPYC.

The protein belongs to the AccD/PCCB family. Acetyl-CoA carboxylase is a heterohexamer composed of biotin carboxyl carrier protein (AccB), biotin carboxylase (AccC) and two subunits each of ACCase subunit alpha (AccA) and ACCase subunit beta (AccD). It depends on Zn(2+) as a cofactor.

The protein resides in the cytoplasm. It carries out the reaction N(6)-carboxybiotinyl-L-lysyl-[protein] + acetyl-CoA = N(6)-biotinyl-L-lysyl-[protein] + malonyl-CoA. It participates in lipid metabolism; malonyl-CoA biosynthesis; malonyl-CoA from acetyl-CoA: step 1/1. Functionally, component of the acetyl coenzyme A carboxylase (ACC) complex. Biotin carboxylase (BC) catalyzes the carboxylation of biotin on its carrier protein (BCCP) and then the CO(2) group is transferred by the transcarboxylase to acetyl-CoA to form malonyl-CoA. The polypeptide is Acetyl-coenzyme A carboxylase carboxyl transferase subunit beta (Acholeplasma laidlawii (strain PG-8A)).